The primary structure comprises 158 residues: 2-C-methyl-D-erythritol 2,4-cyclodiphosphate synthase (158 aa).

2 residues coordinate a divalent metal cation: Asp8 and His10. 4-CDP-2-C-methyl-D-erythritol 2-phosphate is bound by residues 8 to 10 and 34 to 35; these read DVH and HS. An a divalent metal cation-binding site is contributed by His42. Residues 56-58, 61-65, 100-106, 132-135, Phe139, and Arg142 contribute to the 4-CDP-2-C-methyl-D-erythritol 2-phosphate site; these read DIG, FPDTD, AQVPKMA, and TTTE.

This sequence belongs to the IspF family. Homotrimer. A divalent metal cation is required as a cofactor.

It carries out the reaction 4-CDP-2-C-methyl-D-erythritol 2-phosphate = 2-C-methyl-D-erythritol 2,4-cyclic diphosphate + CMP. Its pathway is isoprenoid biosynthesis; isopentenyl diphosphate biosynthesis via DXP pathway; isopentenyl diphosphate from 1-deoxy-D-xylulose 5-phosphate: step 4/6. Functionally, involved in the biosynthesis of isopentenyl diphosphate (IPP) and dimethylallyl diphosphate (DMAPP), two major building blocks of isoprenoid compounds. Catalyzes the conversion of 4-diphosphocytidyl-2-C-methyl-D-erythritol 2-phosphate (CDP-ME2P) to 2-C-methyl-D-erythritol 2,4-cyclodiphosphate (ME-CPP) with a corresponding release of cytidine 5-monophosphate (CMP). The sequence is that of 2-C-methyl-D-erythritol 2,4-cyclodiphosphate synthase from Sodalis glossinidius (strain morsitans).